The following is a 166-amino-acid chain: 3-hydroxyacyl-[acyl-carrier-protein] dehydratase, mitochondrial (166 aa).

The transit peptide at 1-17 directs the protein to the mitochondrion; that stretch reads MLAKTVFPRGLLVLRSF. A MaoC-like domain is found at 34–125; the sequence is ETRVFSSEDI…VQAIALRETK (92 aa).

In terms of assembly, homodimer. In terms of tissue distribution, expressed in leaves, roots, siliques and flowers.

It is found in the mitochondrion. It catalyses the reaction a (3R)-hydroxyacyl-[ACP] = a (2E)-enoyl-[ACP] + H2O. The catalysed reaction is (3R)-hydroxyhexadecanoyl-[ACP] = (2E)-hexadecenoyl-[ACP] + H2O. The enzyme catalyses (3R)-hydroxydecanoyl-[ACP] = (2E)-decenoyl-[ACP] + H2O. Its pathway is lipid metabolism; fatty acid biosynthesis. In terms of biological role, 3-hydroxyl-[acyl-carrier-protein] (3-hydroxyl-ACP) dehydratase required for mitochondrial fatty acid synthesis (mtFAS). MtFAS are essential for photorespiration and plant development, probably by influencing mitochondrial membrane lipid composition and other lipid metabolic pathways. The chain is 3-hydroxyacyl-[acyl-carrier-protein] dehydratase, mitochondrial from Arabidopsis thaliana (Mouse-ear cress).